The primary structure comprises 240 residues: Large ribosomal subunit protein uL2 (240 aa).

Over residues 1-12 (MGRRIQGQRRGR) the composition is skewed to basic residues. 2 disordered regions span residues 1-21 (MGRR…RAPS) and 198-240 (VDHP…GSNK). Residues 221–231 (PPGRKVGDIAS) are compositionally biased toward basic and acidic residues.

Belongs to the universal ribosomal protein uL2 family. Part of the 50S ribosomal subunit. Forms a bridge to the 30S subunit in the 70S ribosome.

In terms of biological role, one of the primary rRNA binding proteins. Required for association of the 30S and 50S subunits to form the 70S ribosome, for tRNA binding and peptide bond formation. It has been suggested to have peptidyltransferase activity; this is somewhat controversial. Makes several contacts with the 16S rRNA in the 70S ribosome. The chain is Large ribosomal subunit protein uL2 from Halorubrum lacusprofundi (strain ATCC 49239 / DSM 5036 / JCM 8891 / ACAM 34).